A 586-amino-acid polypeptide reads, in one-letter code: Arginine--tRNA ligase (586 aa).

The short motif at 131 to 141 (ANPTGPMHVGH) is the 'HIGH' region element.

Belongs to the class-I aminoacyl-tRNA synthetase family. Monomer.

The protein localises to the cytoplasm. It catalyses the reaction tRNA(Arg) + L-arginine + ATP = L-arginyl-tRNA(Arg) + AMP + diphosphate. This Azorhizobium caulinodans (strain ATCC 43989 / DSM 5975 / JCM 20966 / LMG 6465 / NBRC 14845 / NCIMB 13405 / ORS 571) protein is Arginine--tRNA ligase.